A 116-amino-acid polypeptide reads, in one-letter code: Large ribosomal subunit protein bL19 (116 aa).

The protein belongs to the bacterial ribosomal protein bL19 family.

This protein is located at the 30S-50S ribosomal subunit interface and may play a role in the structure and function of the aminoacyl-tRNA binding site. The chain is Large ribosomal subunit protein bL19 from Flavobacterium psychrophilum (strain ATCC 49511 / DSM 21280 / CIP 103535 / JIP02/86).